We begin with the raw amino-acid sequence, 661 residues long: 7-beta-hydroxy-3-oxochol-24-oyl-CoA 4-desaturase (661 aa).

Position 104 (Q104) interacts with FMN. Position 168-171 (168-171 (HCAH)) interacts with substrate. The Proton donor role is filled by Y173. FMN contacts are provided by residues R222, K298, and 320–321 (GR). [4Fe-4S] cluster-binding residues include C344, C347, C351, and C363. 5 residues coordinate FAD: G394, E413, Q421, K431, and A458.

It in the N-terminal section; belongs to the NADH:flavin oxidoreductase/NADH oxidase family. In terms of assembly, homotrimer. FMN is required as a cofactor. The cofactor is FAD. It depends on [4Fe-4S] cluster as a cofactor.

The catalysed reaction is 7beta-hydroxy-3-oxochol-24-oyl-CoA + NAD(+) = 7beta-hydroxy-3-oxochol-4-en-24-oyl-CoA + NADH + H(+). It participates in lipid metabolism; bile acid degradation. Activity is inhibited by sulfhydryl-reactive compounds, acriflavine, o-phenanthroline and EDTA. Functionally, NADH-dependent flavin oxidoreductase. Stereo-specific NAD(H)-dependent 3-oxo-delta4-cholenoic acid oxidoreductase involved in bile acid 7beta-dehydroxylation. This Clostridium scindens (strain JCM 10418 / VPI 12708) protein is 7-beta-hydroxy-3-oxochol-24-oyl-CoA 4-desaturase.